A 182-amino-acid polypeptide reads, in one-letter code: ATP-dependent protease subunit HslV (182 aa).

The active site involves threonine 7. Positions 166, 169, and 172 each coordinate Na(+).

Belongs to the peptidase T1B family. HslV subfamily. A double ring-shaped homohexamer of HslV is capped on each side by a ring-shaped HslU homohexamer. The assembly of the HslU/HslV complex is dependent on binding of ATP.

The protein resides in the cytoplasm. It carries out the reaction ATP-dependent cleavage of peptide bonds with broad specificity.. With respect to regulation, allosterically activated by HslU binding. In terms of biological role, protease subunit of a proteasome-like degradation complex believed to be a general protein degrading machinery. In Albidiferax ferrireducens (strain ATCC BAA-621 / DSM 15236 / T118) (Rhodoferax ferrireducens), this protein is ATP-dependent protease subunit HslV.